A 147-amino-acid chain; its full sequence is Arginine repressor (147 aa).

It belongs to the ArgR family.

It localises to the cytoplasm. It participates in amino-acid biosynthesis; L-arginine biosynthesis [regulation]. Its function is as follows. Regulates arginine biosynthesis genes. This chain is Arginine repressor, found in Chlamydia caviae (strain ATCC VR-813 / DSM 19441 / 03DC25 / GPIC) (Chlamydophila caviae).